Reading from the N-terminus, the 315-residue chain is Aldo-keto reductase family 4 member C11 (315 aa).

A2 carries the N-acetylalanine modification. Residues T23 to W24 and D47 contribute to the NADP(+) site. Y52 serves as the catalytic Proton donor. NADP(+) is bound by residues H114, S158–N159, Q180, S207–G213, K256–T258, and R262–N266. S295 bears the Phosphoserine mark.

The protein belongs to the aldo/keto reductase family.

Oxidoreductase that may act on a broad range of substrates such as ketosteroids, aldehydes, ketones and sugars. In Arabidopsis thaliana (Mouse-ear cress), this protein is Aldo-keto reductase family 4 member C11 (AKR4C11).